The following is a 285-amino-acid chain: Putative ankyrin repeat protein R551 (285 aa).

ANK repeat units lie at residues 99–129, 157–186, 188–214, and 215–249; these read DLKS…PIKI, NDFD…LQDE, IGKI…EAFR, and SAPD…CIQQ.

The chain is Putative ankyrin repeat protein R551 from Acanthamoeba polyphaga (Amoeba).